A 176-amino-acid chain; its full sequence is Peptidoglycan-associated lipoprotein (176 aa).

The N-terminal stretch at 1–32 (MSRIDTPAASRMQTIARNPVMIALVMTLALAG) is a signal peptide. Cys-33 carries the N-palmitoyl cysteine lipid modification. Residue Cys-33 is the site of S-diacylglycerol cysteine attachment. Residues 58 to 175 (QQDFTVNVGD…RAVTVLGGAG (118 aa)) enclose the OmpA-like domain.

It belongs to the Pal lipoprotein family. As to quaternary structure, the Tol-Pal system is composed of five core proteins: the inner membrane proteins TolA, TolQ and TolR, the periplasmic protein TolB and the outer membrane protein Pal. They form a network linking the inner and outer membranes and the peptidoglycan layer.

The protein localises to the cell outer membrane. Its function is as follows. Part of the Tol-Pal system, which plays a role in outer membrane invagination during cell division and is important for maintaining outer membrane integrity. This Rhizobium meliloti (strain 1021) (Ensifer meliloti) protein is Peptidoglycan-associated lipoprotein.